Reading from the N-terminus, the 385-residue chain is 1-deoxy-D-xylulose 5-phosphate reductoisomerase (385 aa).

NADPH-binding residues include T10, G11, S12, I13, G36, N38, and N122. K123 contributes to the 1-deoxy-D-xylulose 5-phosphate binding site. E124 is a binding site for NADPH. D148 serves as a coordination point for Mn(2+). Positions 149, 150, 174, and 197 each coordinate 1-deoxy-D-xylulose 5-phosphate. E150 is a Mn(2+) binding site. Position 203 (G203) interacts with NADPH. Residues S210, N215, K216, and E219 each coordinate 1-deoxy-D-xylulose 5-phosphate. A Mn(2+)-binding site is contributed by E219.

This sequence belongs to the DXR family. Mg(2+) serves as cofactor. The cofactor is Mn(2+).

It carries out the reaction 2-C-methyl-D-erythritol 4-phosphate + NADP(+) = 1-deoxy-D-xylulose 5-phosphate + NADPH + H(+). Its pathway is isoprenoid biosynthesis; isopentenyl diphosphate biosynthesis via DXP pathway; isopentenyl diphosphate from 1-deoxy-D-xylulose 5-phosphate: step 1/6. In terms of biological role, catalyzes the NADPH-dependent rearrangement and reduction of 1-deoxy-D-xylulose-5-phosphate (DXP) to 2-C-methyl-D-erythritol 4-phosphate (MEP). The chain is 1-deoxy-D-xylulose 5-phosphate reductoisomerase from Citrifermentans bemidjiense (strain ATCC BAA-1014 / DSM 16622 / JCM 12645 / Bem) (Geobacter bemidjiensis).